A 41-amino-acid polypeptide reads, in one-letter code: Bacteriocin bavaricin-A (41 aa).

Belongs to the bacteriocin class IIA/YGNGV family.

It localises to the secreted. Functionally, this heat stable bacteriocin shows activity against species of Lactobacillus, Listeria monocytogenes, Pediococcus, Enterococcus, Leuconostoc and Lactococcus. This Latilactobacillus sakei (Lactobacillus sakei) protein is Bacteriocin bavaricin-A.